The following is a 406-amino-acid chain: Phosphopentomutase (406 aa).

Mn(2+)-binding residues include Asp10, Asp305, His310, Asp346, His347, and His358.

Belongs to the phosphopentomutase family. Mn(2+) serves as cofactor.

Its subcellular location is the cytoplasm. It carries out the reaction 2-deoxy-alpha-D-ribose 1-phosphate = 2-deoxy-D-ribose 5-phosphate. The enzyme catalyses alpha-D-ribose 1-phosphate = D-ribose 5-phosphate. It participates in carbohydrate degradation; 2-deoxy-D-ribose 1-phosphate degradation; D-glyceraldehyde 3-phosphate and acetaldehyde from 2-deoxy-alpha-D-ribose 1-phosphate: step 1/2. In terms of biological role, isomerase that catalyzes the conversion of deoxy-ribose 1-phosphate (dRib-1-P) and ribose 1-phosphate (Rib-1-P) to deoxy-ribose 5-phosphate (dRib-5-P) and ribose 5-phosphate (Rib-5-P), respectively. This is Phosphopentomutase from Methylobacterium radiotolerans (strain ATCC 27329 / DSM 1819 / JCM 2831 / NBRC 15690 / NCIMB 10815 / 0-1).